The sequence spans 176 residues: Inner membrane-spanning protein YciB (176 aa).

6 helical membrane-spanning segments follow: residues 3 to 23 (FLFD…WGIF), 24 to 44 (TATA…AFRH), 49 to 69 (TMLW…LVLH), 81 to 101 (LYWL…NNLI), 119 to 139 (LNVA…YVVH), and 149 to 169 (FKLF…SLWL).

The protein belongs to the YciB family.

The protein resides in the cell inner membrane. Its function is as follows. Plays a role in cell envelope biogenesis, maintenance of cell envelope integrity and membrane homeostasis. The polypeptide is Inner membrane-spanning protein YciB (Burkholderia ambifaria (strain MC40-6)).